Here is an 88-residue protein sequence, read N- to C-terminus: Small ribosomal subunit protein uS15 (88 aa).

Belongs to the universal ribosomal protein uS15 family. In terms of assembly, part of the 30S ribosomal subunit. Forms a bridge to the 50S subunit in the 70S ribosome, contacting the 23S rRNA.

One of the primary rRNA binding proteins, it binds directly to 16S rRNA where it helps nucleate assembly of the platform of the 30S subunit by binding and bridging several RNA helices of the 16S rRNA. Functionally, forms an intersubunit bridge (bridge B4) with the 23S rRNA of the 50S subunit in the ribosome. This chain is Small ribosomal subunit protein uS15, found in Paracidovorax citrulli (strain AAC00-1) (Acidovorax citrulli).